A 603-amino-acid polypeptide reads, in one-letter code: Aquaporin-2 (603 aa).

Residues 40 to 70 (SLKKYKYNLFFEFIGSFLFVFFISIYMLNSN) form a helical membrane-spanning segment. 2 stretches are compositionally biased toward basic and acidic residues: residues 135–149 (NNKS…DDKI) and 156–190 (EFEK…EDPK). The tract at residues 135-200 (NNKSKREVER…NISNKNENYD (66 aa)) is disordered. Residues 191–200 (NISNKNENYD) show a composition bias toward polar residues. A run of 5 helical transmembrane segments spans residues 282 to 299 (HAIY…FILL), 321 to 346 (FALS…AHLY), 360 to 393 (IIKT…EENK), 442 to 471 (NKYI…VTNT), and 509 to 542 (ITKI…FLSL).

The protein belongs to the MIP/aquaporin (TC 1.A.8) family.

It localises to the endomembrane system. The enzyme catalyses H2O(in) = H2O(out). It catalyses the reaction glycerol(in) = glycerol(out). Required for sporozoite development in the mosquito vector. This Plasmodium falciparum (isolate NF54) protein is Aquaporin-2.